The following is a 517-amino-acid chain: GMP synthase [glutamine-hydrolyzing] (517 aa).

In terms of domain architecture, Glutamine amidotransferase type-1 spans 9-199 (RILILDFGSQ…VLGVCGCERL (191 aa)). The active-site Nucleophile is the cysteine 86. Catalysis depends on residues histidine 173 and glutamate 175. Residues 200–392 (WTSESIIEDA…LGLPYNMLYR (193 aa)) enclose the GMPS ATP-PPase domain. Residue 227 to 233 (SGGVDSS) coordinates ATP.

As to quaternary structure, homodimer.

It catalyses the reaction XMP + L-glutamine + ATP + H2O = GMP + L-glutamate + AMP + diphosphate + 2 H(+). The protein operates within purine metabolism; GMP biosynthesis; GMP from XMP (L-Gln route): step 1/1. Functionally, catalyzes the synthesis of GMP from XMP. The sequence is that of GMP synthase [glutamine-hydrolyzing] from Vibrio cholerae serotype O1 (strain ATCC 39541 / Classical Ogawa 395 / O395).